The primary structure comprises 622 residues: Interleukin-1 receptor-associated kinase-like 2 (622 aa).

One can recognise a Death domain in the interval 13–94 (LDDLCRNIDT…RAAQIVLSWK (82 aa)). Residues 208–473 (FDQSHRISEG…LPEACEEAWA (266 aa)) form the Protein kinase domain. ATP contacts are provided by residues 214–222 (ISEGTFADI), K235, and 335–338 (KSAN). Disordered stretches follow at residues 511-532 (RVSEATGSSSNTPEETDDVDNS) and 553-591 (LFTGHGAAQPSTSGRQEADSSSEACTGPQTPQNATETSW). Composition is skewed to polar residues over residues 513–523 (SEATGSSSNTP) and 561–590 (QPSTSGRQEADSSSEACTGPQTPQNATETS).

This sequence belongs to the protein kinase superfamily. TKL Ser/Thr protein kinase family. Pelle subfamily. Interacts with MYD88. IL-1 stimulation leads to the formation of a signaling complex which dissociates from the IL-1 receptor following the binding of PELI1. In terms of tissue distribution, ubiquitously expressed, with a higher expression observed in brain, spleen and liver. Isoform 1 and isoform 2 are considered agonist and isoform 3 and isoform 4 are considered antagonist.

Binds to the IL-1 type I receptor following IL-1 engagement, triggering intracellular signaling cascades leading to transcriptional up-regulation and mRNA stabilization. The chain is Interleukin-1 receptor-associated kinase-like 2 (Irak2) from Mus musculus (Mouse).